The primary structure comprises 133 residues: Exosome complex protein C1739.07 (133 aa).

Residues Val96 to Thr133 are disordered. Residues Ala102–Asn116 are compositionally biased toward low complexity.

It belongs to the C1D family. In terms of assembly, component of the exosome multienzyme ribonuclease complex. Interacts with cut3.

Its subcellular location is the cytoplasm. It localises to the nucleus. Functionally, required for exosome-dependent processing of pre-rRNA and small nucleolar RNA (snRNA) precursors. Involved in processing of 35S pre-rRNA at the A0, A1 and A2 sites. The polypeptide is Exosome complex protein C1739.07 (Schizosaccharomyces pombe (strain 972 / ATCC 24843) (Fission yeast)).